The primary structure comprises 242 residues: Small ribosomal subunit protein eS4 (242 aa).

In terms of domain architecture, S4 RNA-binding spans 43–106 (LPLMIIVRDI…GDVYRVLPDE (64 aa)).

Belongs to the eukaryotic ribosomal protein eS4 family.

The protein is Small ribosomal subunit protein eS4 (rps4e) of Methanothermobacter thermautotrophicus (strain ATCC 29096 / DSM 1053 / JCM 10044 / NBRC 100330 / Delta H) (Methanobacterium thermoautotrophicum).